The primary structure comprises 503 residues: WD repeat-containing protein 55 homolog (503 aa).

Residues Met1–Leu131 form a disordered region. Composition is skewed to acidic residues over residues Asp12–Met23 and Val37–Ala56. Positions Pro59–Asp76 are enriched in polar residues. Over residues Asn78–Glu96 the composition is skewed to acidic residues. WD repeat units lie at residues Lys157–Leu196, Val201–Glu242, Ala244–Glu282, Glu285–Gln324, Pro327–Asp366, and Gln411–Asp450. Residues Thr483–Ala503 are disordered.

Belongs to the WD repeat WDR55 family.

The sequence is that of WD repeat-containing protein 55 homolog from Drosophila pseudoobscura pseudoobscura (Fruit fly).